The chain runs to 230 residues: MKLFQNSYDFNYPWDQVTAANWKKYPNEISTHVIAVDVLRRELKDQGKVLVTERLITVKQGVPKWIMMMLGGTNMSHVREVSVVDLNKKSLTMRSCNLTMCNLLKVYETVTYSPHPDDSANKTLFQQEAQITAYGSIRKLCNKMEDWSVQRFCENAKKGKMGFDAVLQVFSENWEKHVDDLSNQLVSKVNETMEDVKISAGTLLKGTERSGRTILQQNIDLFRDAYNHEN.

A PRELI/MSF1 domain is found at 1–175 (MKLFQNSYDF…VLQVFSENWE (175 aa)).

It belongs to the slowmo family. Interacts with MDM35.

The protein resides in the mitochondrion inner membrane. It localises to the mitochondrion intermembrane space. In terms of biological role, required for mitochondrial cristae morphogenesis and MGM1-processing. Controls the stability of mitochondrial phosphatidylethanolamine (PE). With UPS1, controls the level of cardiolipin in mitochondria. Cardiolipin is a unique phospholipid with four fatty acid chains and is present mainly in the mitochondrial inner membrane where it stabilizes the electron transport chain supercomplex between complexes III and IV through direct interaction of their subunits. This chain is Protein UPS2, mitochondrial (UPS2), found in Saccharomyces cerevisiae (strain ATCC 204508 / S288c) (Baker's yeast).